Here is a 118-residue protein sequence, read N- to C-terminus: Large ribosomal subunit protein bL17 (118 aa).

It belongs to the bacterial ribosomal protein bL17 family. In terms of assembly, part of the 50S ribosomal subunit. Contacts protein L32.

This chain is Large ribosomal subunit protein bL17, found in Hydrogenobaculum sp. (strain Y04AAS1).